Consider the following 537-residue polypeptide: MAKIIEYDEEARQGMLAGLDKLADTVKVTLGPKGRNVVLDKTYGAPTITNDGVSIAKEIDLEDPFERIGAELVKEVAKRTDDVAGDGTTTATVLAQSLVHEGLKNVVAGSNPIALRRGIEKASDALVKQLVASAKPVETKEQIAATATISAGDPEVGEKIAEALDKVGQDGVVTVEDNNRFGLDLDFTEGMRFDKGYISPYFVTNAEDQTAVLDDPYILLTSSKVSSQQDVVHIAELVMKTGKPLLIVAEDVDGEALPTLILNNIRGTFKSCAVKAPGFGDRRKAMLQDMAILTGGQVVSEDLGLKLDSIDLSVFGTAKKVIVSKDETTIVSGGGSKEDVAARVAQIRAEIEKTDSDYDREKLQERLAKLAGGVAVIKVGAATEVEAKERKHRIEDAVRNAKAAIEEGLVPGGGVALVQAAEKVEKDFNLEGDEATGAAIVFSGIEAPIKQIAENAGLSGAVVIDKVRSLPEGEGFNAATDTYEDLMAAGVTDPVKVTRSALQNAASIAGLFLTTEAVVANKPEPAAAPAAGQDMGY.

ATP-binding positions include 29 to 32 (TLGP), 86 to 90 (DGTTT), Gly413, 477 to 479 (NAA), and Asp493.

This sequence belongs to the chaperonin (HSP60) family. Forms a cylinder of 14 subunits composed of two heptameric rings stacked back-to-back. Interacts with the co-chaperonin GroES.

It is found in the cytoplasm. The enzyme catalyses ATP + H2O + a folded polypeptide = ADP + phosphate + an unfolded polypeptide.. In terms of biological role, together with its co-chaperonin GroES, plays an essential role in assisting protein folding. The GroEL-GroES system forms a nano-cage that allows encapsulation of the non-native substrate proteins and provides a physical environment optimized to promote and accelerate protein folding. This chain is Chaperonin GroEL, found in Bifidobacterium animalis subsp. lactis (strain AD011).